The following is a 177-amino-acid chain: Probable chemoreceptor glutamine deamidase CheD (177 aa).

The protein belongs to the CheD family.

It carries out the reaction L-glutaminyl-[protein] + H2O = L-glutamyl-[protein] + NH4(+). In terms of biological role, probably deamidates glutamine residues to glutamate on methyl-accepting chemotaxis receptors (MCPs), playing an important role in chemotaxis. This chain is Probable chemoreceptor glutamine deamidase CheD, found in Pseudomonas fluorescens (strain SBW25).